The sequence spans 103 residues: Large ribosomal subunit protein bL21 (103 aa).

The protein belongs to the bacterial ribosomal protein bL21 family. Part of the 50S ribosomal subunit. Contacts protein L20.

In terms of biological role, this protein binds to 23S rRNA in the presence of protein L20. The sequence is that of Large ribosomal subunit protein bL21 from Salmonella schwarzengrund (strain CVM19633).